A 145-amino-acid chain; its full sequence is Globin (145 aa).

N-acetylserine is present on Ser-2. Residues 2–145 (SLSAAEADLV…IVAALKAAGK (144 aa)) enclose the Globin domain. Residue His-96 participates in heme b binding.

Belongs to the globin family. As to quaternary structure, monomer.

The polypeptide is Globin (Aplysia kurodai (Kuroda's sea hare)).